The chain runs to 346 residues: N-acetyl-gamma-glutamyl-phosphate reductase (346 aa).

Residue C149 is part of the active site.

The protein belongs to the NAGSA dehydrogenase family. Type 1 subfamily.

Its subcellular location is the cytoplasm. The enzyme catalyses N-acetyl-L-glutamate 5-semialdehyde + phosphate + NADP(+) = N-acetyl-L-glutamyl 5-phosphate + NADPH + H(+). It functions in the pathway amino-acid biosynthesis; L-arginine biosynthesis; N(2)-acetyl-L-ornithine from L-glutamate: step 3/4. Functionally, catalyzes the NADPH-dependent reduction of N-acetyl-5-glutamyl phosphate to yield N-acetyl-L-glutamate 5-semialdehyde. The protein is N-acetyl-gamma-glutamyl-phosphate reductase of Micrococcus luteus (strain ATCC 4698 / DSM 20030 / JCM 1464 / CCM 169 / CCUG 5858 / IAM 1056 / NBRC 3333 / NCIMB 9278 / NCTC 2665 / VKM Ac-2230) (Micrococcus lysodeikticus).